A 226-amino-acid polypeptide reads, in one-letter code: Oxaloacetate tautomerase FAHD2, mitochondrial (226 aa).

The N-terminal 30 residues, 1–30, are a transit peptide targeting the mitochondrion; that stretch reads MAAAAQRLLAASTKIVGVGRNFVAHAKELG. Positions 69, 71, and 100 each coordinate Mg(2+).

This sequence belongs to the FAH family. Mg(2+) serves as cofactor. Mn(2+) is required as a cofactor.

It is found in the mitochondrion. It carries out the reaction oxaloacetate = enol-oxaloacetate. Tautomerase that converts enol-oxaloacetate, a strong inhibitor of succinate dehydrogenase, to the physiological keto form of oxaloacetate. This Oryza sativa subsp. japonica (Rice) protein is Oxaloacetate tautomerase FAHD2, mitochondrial.